Consider the following 143-residue polypeptide: Transcriptional regulator MraZ (143 aa).

2 consecutive SpoVT-AbrB domains span residues 5-47 (EYEH…PRGV) and 76-119 (AADM…SPRR).

Belongs to the MraZ family. In terms of assembly, forms oligomers.

The protein localises to the cytoplasm. Its subcellular location is the nucleoid. The sequence is that of Transcriptional regulator MraZ from Roseiflexus castenholzii (strain DSM 13941 / HLO8).